We begin with the raw amino-acid sequence, 233 residues long: DNA repair protein RecO (233 aa).

It belongs to the RecO family.

Its function is as follows. Involved in DNA repair and RecF pathway recombination. The sequence is that of DNA repair protein RecO from Pseudomonas aeruginosa (strain LESB58).